A 957-amino-acid chain; its full sequence is Mediator of RNA polymerase II transcription subunit 16 (957 aa).

The tract at residues 855-883 (YTEVDAAPSGKTNAQGPPQQPQPQQQRRR) is disordered.

Belongs to the Mediator complex subunit 16 family. In terms of assembly, component of the Mediator complex.

Its subcellular location is the nucleus. In terms of biological role, component of the Mediator complex, a coactivator involved in the regulated transcription of nearly all RNA polymerase II-dependent genes. Mediator functions as a bridge to convey information from gene-specific regulatory proteins to the basal RNA polymerase II transcription machinery. Mediator is recruited to promoters by direct interactions with regulatory proteins and serves as a scaffold for the assembly of a functional preinitiation complex with RNA polymerase II and the general transcription factors. This chain is Mediator of RNA polymerase II transcription subunit 16 (sin4), found in Aspergillus clavatus (strain ATCC 1007 / CBS 513.65 / DSM 816 / NCTC 3887 / NRRL 1 / QM 1276 / 107).